The sequence spans 277 residues: Urease accessory protein UreD (277 aa).

It belongs to the UreD family. In terms of assembly, ureD, UreF and UreG form a complex that acts as a GTP-hydrolysis-dependent molecular chaperone, activating the urease apoprotein by helping to assemble the nickel containing metallocenter of UreC. The UreE protein probably delivers the nickel.

Its subcellular location is the cytoplasm. Required for maturation of urease via the functional incorporation of the urease nickel metallocenter. The polypeptide is Urease accessory protein UreD (Rhodopseudomonas palustris (strain BisB18)).